We begin with the raw amino-acid sequence, 120 residues long: Small ribosomal subunit protein uS13 (120 aa).

The disordered stretch occupies residues 94-120 (GLPLRGQRTRTNARTRKGPRKAIAGKK).

This sequence belongs to the universal ribosomal protein uS13 family. In terms of assembly, part of the 30S ribosomal subunit. Forms a loose heterodimer with protein S19. Forms two bridges to the 50S subunit in the 70S ribosome.

Functionally, located at the top of the head of the 30S subunit, it contacts several helices of the 16S rRNA. In the 70S ribosome it contacts the 23S rRNA (bridge B1a) and protein L5 of the 50S subunit (bridge B1b), connecting the 2 subunits; these bridges are implicated in subunit movement. Contacts the tRNAs in the A and P-sites. The polypeptide is Small ribosomal subunit protein uS13 (Azoarcus sp. (strain BH72)).